The sequence spans 495 residues: Oxidoreductase AflY (495 aa).

The segment at 1-22 (MGSHAPAVAGKPDPKKGPYQAT) is disordered.

Belongs to the questin oxidase family.

It participates in mycotoxin biosynthesis; aflatoxin biosynthesis. Its function is as follows. Oxidoreductase; part of the gene cluster that mediates the biosynthesis of aflatoxins, a group of polyketide-derived furanocoumarins, and part of the most toxic and carcinogenic compounds among the known mycotoxins. The four major aflatoxins produced by A.parasiticus are aflatoxin B1 (AFB1), aflatoxin B2 (AFB2), aflatoxin G1 (AFG1) and aflatoxin G2 (AFG2). Within the aflatoxin pathway, the oxidoreductase aflY seems to be involved in the conversion of versicolorin A (VERA) to demethylsterigmatocystin (DMST), through probable Baeyer-Villiger oxidation required for the formation of the xanthone ring. The biosynthesis of aflatoxins begins with the norsolorinic acid synthase aflC that combines a hexanoyl starter unit produced by the fatty acid synthase aflA/aflB and 7 malonyl-CoA extender units to synthesize the precursor NOR. The second step is the conversion of NOR to averantin and requires the norsolorinic acid ketoreductase aflD, which catalyzes the dehydration of norsolorinic acid to form (1'S)-averantin. The norsolorinic acid reductases aflE and aflF may also play a role in the conversion of NOR to AVN. The cytochrome P450 monooxygenase aflG then catalyzes the hydroxylation of AVN to 5'hydroxyaverantin (HAVN). The next step is performed by the 5'-hydroxyaverantin dehydrogenase aflH that transforms HAVN to 5'-oxoaverantin (OAVN) which is further converted to averufin (AVF) by aflK that plays a dual role in the pathway, as a 5'-oxoaverantin cyclase that mediates conversion of 5'-oxoaverantin, as well as a versicolorin B synthase in a later step in the pathway. The averufin oxidase aflI catalyzes the conversion of AVF to versiconal hemiacetal acetate (VHA). VHA is then the substrate for the versiconal hemiacetal acetate esterase aflJ to yield versiconal (VAL). Versicolorin B synthase aflK then converts VAL to versicolorin B (VERB) by closing the bisfuran ring of aflatoxin which is required for DNA-binding, thus giving to aflatoxin its activity as a mutagen. Then, the activity of the versicolorin B desaturase aflL leads to versicolorin A (VERA). A branch point starts from VERB since it can also be converted to dihydrodemethylsterigmatocystin (DMDHST), probably also by aflL, VERA being a precursor for aflatoxins B1 and G1, and DMDHST for aflatoxins B2 and G2. Next, the versicolorin reductase aflM and the cytochrome P450 monooxygenase aflN are involved in conversion of VERA to demethylsterigmatocystin (DMST). AflX and aflY seem also involved in this step, through probable aflX-mediated epoxide ring-opening step following versicolorin A oxidation and aflY-mediated Baeyer-Villiger oxidation required for the formation of the xanthone ring. The methyltransferase aflO then leads to the modification of DMST to sterigmatocystin (ST), and of DMDHST to dihydrosterigmatocystin (DHST). Both ST and DHST are then substrates of the O-methyltransferase aflP to yield O-methylsterigmatocystin (OMST) and dihydro-O-methylsterigmatocystin (DHOMST), respectively. Finally OMST is converted to aflatoxins B1 and G1, and DHOMST to aflatoxins B2 and G2, via the action of several enzymes including O-methylsterigmatocystin oxidoreductase aflQ, the cytochrome P450 monooxygenase aflU, but also the NADH-dependent flavin oxidoreductase nadA which is specifically required for the synthesis of AFG1. This is Oxidoreductase AflY from Aspergillus parasiticus (strain ATCC 56775 / NRRL 5862 / SRRC 143 / SU-1).